We begin with the raw amino-acid sequence, 41 residues long: Conotoxin Ac4.2 (41 aa).

The propeptide occupies 1-11 (FDGRNAAVNER). A 4-hydroxyproline modification is found at Pro-13. Thr-18 and Thr-20 each carry an O-linked (HexNAc...) threonine glycan. Pro-29 and Pro-33 each carry 4-hydroxyproline. Cys-40 is subject to Cysteine amide.

It belongs to the conotoxin A superfamily. Post-translationally, contains 3 disulfide bonds. Expressed by the venom duct.

It localises to the secreted. Its function is as follows. Probable neurotoxin with ion channel inhibitor activity. The chain is Conotoxin Ac4.2 from Conus achatinus (Little frog cone).